A 436-amino-acid chain; its full sequence is MKSEKSRTTSWLFQSHEVTEILGRVKKNRKKLVKGLHRAGPPPEKNYLPDSPALSPIELKQELPKYLPALQGCRSVEEFQCLNRIEEGTYGVVYRAKDKKTDEIVALKRLKMEKEKEGFPLTSIREINTILKAQHPNIVTVREIVVGSNMDKIYIVMNYVEHDLKSLMETMKQPFLPGEVKTLMIQLLSGVKHLHDNWILHRDLKTSNLLLTHAGILKVGDFGLAREYGSPLKAYTPVVVTLWYRAPELLLGAKEYSTACDMWSVGCIFGELLTQKPLFPGKSDIDQINKIFKDIGTPSEKIWPGYSELPAVKKMTFSELPYNNLRKRFGALLSDQGFDLMNKFLTYYPGRRINAEDGLKHEYFRETPLPIDPSMFPTWPAKSEQQCVKRGTSPKPPEGGLGYSQLGDDDLKETGFHLTTTNDGAVSCRPWCSLLF.

The Nuclear localization signal signature appears at 25–30; the sequence is VKKNRK. The calmodulin-binding stretch occupies residues 30 to 44; it reads KKLVKGLHRAGPPPE. Positions 79–364 constitute a Protein kinase domain; the sequence is FQCLNRIEEG…AEDGLKHEYF (286 aa). ATP is bound by residues 85 to 93 and lysine 108; that span reads IEEGTYGVV. Residue serine 123 is modified to Phosphoserine; by CDK7. Phosphothreonine; by CDK7 is present on threonine 129. Aspartate 203 acts as the Proton acceptor in catalysis. Serine 230 bears the Phosphoserine mark. Tyrosine 235 carries the post-translational modification Phosphotyrosine. Threonine 236 carries the post-translational modification Phosphothreonine. Lysine 282 is covalently cross-linked (Glycyl lysine isopeptide (Lys-Gly) (interchain with G-Cter in SUMO2)). Residues 383–406 are disordered; the sequence is SEQQCVKRGTSPKPPEGGLGYSQL. Threonine 392 is modified (phosphothreonine). Serine 393 is modified (phosphoserine).

Belongs to the protein kinase superfamily. CMGC Ser/Thr protein kinase family. CDC2/CDKX subfamily. In terms of assembly, may interact PAK1 and RANBP9. p110C interacts with RNPS1. Interacts with CCND3. Interacts with CCNL1 and CCNL2. Forms complexes with pre-mRNA-splicing factors, including at least SRSF1, SRSF2 AND SRSF7/SLU7. Mg(2+) serves as cofactor.

Its subcellular location is the cytoplasm. It localises to the nucleus membrane. The protein resides in the endomembrane system. The protein localises to the perinuclear region. It catalyses the reaction L-seryl-[protein] + ATP = O-phospho-L-seryl-[protein] + ADP + H(+). The enzyme catalyses L-threonyl-[protein] + ATP = O-phospho-L-threonyl-[protein] + ADP + H(+). Plays multiple roles in cell cycle progression, cytokinesis and apoptosis. Involved in pre-mRNA splicing in a kinase activity-dependent manner. May act as a negative regulator of normal cell cycle progression. This chain is Cyclin-dependent kinase 11B (Cdk11b), found in Rattus norvegicus (Rat).